Consider the following 669-residue polypeptide: Epithelial sodium channel subunit alpha (669 aa).

The disordered stretch occupies residues 1 to 43 (MEGNKLEEQDSSPPQSTPGLMKGNKREEQGLGPEPAAPQQPTA). Residues 1–85 (MEGNKLEEQD…CSQHNRMKTA (85 aa)) lie on the Cytoplasmic side of the membrane. The segment covering 33 to 42 (PEPAAPQQPT) has biased composition (low complexity). The chain crosses the membrane as a helical span at residues 86–106 (FWAVLWLCTFGMMYWQFGLLF). Topologically, residues 107-562 (GEYFSYPVSL…SQWSLWFGSS (456 aa)) are extracellular. Disulfide bonds link Cys133–Cys305, Cys229–Cys236, Cys282–Cys289, Cys394–Cys479, Cys416–Cys456, Cys416–Cys475, Cys420–Cys471, Cys429–Cys456, Cys429–Cys479, and Cys431–Cys445. Residues 175 to 243 (RSRRDLRGTL…SDCFYQTYSS (69 aa)) form a gating release of inhibition by proteolysis (GRIP); protease-sensitive region that is responsible for the proteolytic activation of the channel region. Residues 563–583 (VLSVVEMAELVFDLLVIMFLM) traverse the membrane as a helical segment. The Cytoplasmic portion of the chain corresponds to 584-669 (LLRRFRSRYW…SSSTCPLGGP (86 aa)). Residues 620 to 669 (HPMSLSLSQPGPAPSPALTAPPPAYATLGPRPSPGGSAGASSSTCPLGGP) form a disordered region. The span at 630 to 643 (GPAPSPALTAPPPA) shows a compositional bias: pro residues. The short motif at 640-644 (PPPAY) is the PY motif; recruits WW domain-containing proteins and is thereby required for ubiquitination and inhibition of the channel by NEDD4 and NEDD4L element.

It belongs to the amiloride-sensitive sodium channel (TC 1.A.6) family. SCNN1A subfamily. In terms of assembly, heterotrimer; containing an alpha/SCNN1A, a beta/SCNN1B and a gamma/SCNN1G subunit. Interacts with WWP1 (via WW domains). Interacts with WWP2 (via WW domains); inhibits the channel. Interacts with BPIFA1; the interaction is indirect via SCNN1B and inhibits the proteolytic processing of SCNN1A and SCNN1G and the activation of ENaC. Interacts with the full-length immature form of PCSK9 (pro-PCSK9); inhibits ENaC by promoting its proteasomal degradation. Post-translationally, ubiquitinated. Can be ubiquitinated at multiple sites and undergo monoubiquitination and polyubiquitination. Ubiquitination by NEDD4 or NEDD4L inhibits the ENaC channel through endocytosis, intracellular retention and degradation of its individual subunits. In terms of processing, ENaC is activated through the proteolytic maturation of its subunits. Furin cleaves the SCNN1A subunit, which results in a stepwise increase in the open probability of the channel due to the release of an inhibitory tract. BPIFA1, which is recruited by the SCNN1B subunit, prevents the proteolytic activation of ENaC. N-glycosylated. Expressed in the female reproductive tract, from the fimbrial end of the fallopian tube to the endometrium (at protein level). Expressed in kidney (at protein level). In the respiratory tract, expressed in the bronchial epithelium (at protein level). Highly expressed in lung. Detected at intermediate levels in pancreas and liver, and at low levels in heart and placenta. in skin, expressed in keratinocytes, melanocytes and Merkel cells of the epidermal sub-layers, stratum basale, stratum spinosum and stratum granulosum (at protein level). Expressed in the outer root sheath of the hair follicles (at protein level). Detected in both peripheral and central cells of the sebaceous gland (at protein level). Expressed by eccrine sweat glands (at protein level). In skin, also expressed by arrector pili muscle cells and intradermal adipocytes. Isoform 1 and isoform 2 predominate in all tissues. In terms of tissue distribution, detected in lung and heart.

It localises to the apical cell membrane. The protein localises to the cell projection. The protein resides in the cilium. Its subcellular location is the cytoplasmic granule. It is found in the cytoplasm. It localises to the cytoplasmic vesicle. The protein localises to the secretory vesicle. The protein resides in the acrosome. Its subcellular location is the flagellum. The catalysed reaction is Na(+)(in) = Na(+)(out). Its activity is regulated as follows. Originally identified and characterized by its inhibition by the diuretic drug amiloride. Inhibited by phenamil. Functionally, this is one of the three pore-forming subunits of the heterotrimeric epithelial sodium channel (ENaC), a critical regulator of sodium balance and fluid homeostasis. ENaC operates in epithelial tissues, where it mediates the electrodiffusion of sodium ions from extracellular fluid through the apical membrane of cells, with water following osmotically. It plays a key role in maintaining sodium homeostasis through electrogenic sodium reabsorption in the kidneys. Additionally, ENaC is essential for airway surface liquid homeostasis, which is crucial for proper mucus clearance. In terms of biological role, not functional. The polypeptide is Epithelial sodium channel subunit alpha (Homo sapiens (Human)).